A 425-amino-acid chain; its full sequence is Fe(2+) transport protein 3, chloroplastic (425 aa).

A helical transmembrane segment spans residues 65–85 (FVAIASILLAGAAGVTIPLIG). Topologically, residues 86–97 (RNRRFLQTDGNL) are cytoplasmic. The chain crosses the membrane as a helical span at residues 98-118 (FVTAKAFAAGVILATGFVHML). Residues 119–137 (AGGTEALKNPCLPDFPWSK) lie on the Lumenal side of the membrane. The helical transmembrane segment at 138–158 (FPFPGFFAMIAALITLFVDFM) threads the bilayer. The Cytoplasmic portion of the chain corresponds to 159-269 (GTQYYERKQE…GLDAVNGARH (111 aa)). The helical transmembrane segment at 270–290 (IVVSQVLELGIVSHSIIIGLS) threads the bilayer. The Lumenal portion of the chain corresponds to 291–301 (LGVSQSPCTIR). The chain crosses the membrane as a helical span at residues 302–322 (PLIAALSFHQFFEGFALGGCI). Over 323–333 (SQAQFRNKSAT) the chain is Cytoplasmic. Residues 334-354 (IMACFFALTTPIGIGIGTAVA) traverse the membrane as a helical segment. The Lumenal segment spans residues 355-369 (SSFNSHSVGALVTEG). Residues 370–390 (ILDSLSAGILVYMALVDLIAA) form a helical membrane-spanning segment. Residues 391–404 (DFLSTKMRCNFRLQ) are Cytoplasmic-facing. A helical transmembrane segment spans residues 405–425 (IVSYVMLFLGAGLMSSLAIWA).

Belongs to the ZIP transporter (TC 2.A.5) family.

It localises to the plastid. The protein localises to the chloroplast thylakoid membrane. In terms of biological role, may play a role in the transport of iron in the plastids. The sequence is that of Fe(2+) transport protein 3, chloroplastic (IRT3) from Arabidopsis thaliana (Mouse-ear cress).